Reading from the N-terminus, the 194-residue chain is Probable RNA polymerase sigma factor HI_1459 (194 aa).

Positions D45 to L58 match the Polymerase core binding motif. Residues S161–Y180 constitute a DNA-binding region (H-T-H motif).

This sequence belongs to the sigma-70 factor family. ECF subfamily.

The protein is Probable RNA polymerase sigma factor HI_1459 of Haemophilus influenzae (strain ATCC 51907 / DSM 11121 / KW20 / Rd).